The primary structure comprises 212 residues: Peptide methionine sulfoxide reductase MsrA (212 aa).

Cysteine 52 is a catalytic residue.

This sequence belongs to the MsrA Met sulfoxide reductase family.

It catalyses the reaction L-methionyl-[protein] + [thioredoxin]-disulfide + H2O = L-methionyl-(S)-S-oxide-[protein] + [thioredoxin]-dithiol. The catalysed reaction is [thioredoxin]-disulfide + L-methionine + H2O = L-methionine (S)-S-oxide + [thioredoxin]-dithiol. In terms of biological role, has an important function as a repair enzyme for proteins that have been inactivated by oxidation. Catalyzes the reversible oxidation-reduction of methionine sulfoxide in proteins to methionine. This is Peptide methionine sulfoxide reductase MsrA from Escherichia fergusonii (strain ATCC 35469 / DSM 13698 / CCUG 18766 / IAM 14443 / JCM 21226 / LMG 7866 / NBRC 102419 / NCTC 12128 / CDC 0568-73).